The primary structure comprises 177 residues: Olfactory protein (177 aa).

The first 17 residues, 1–17 (MIRIIAIVVLFFLQCQA), serve as a signal peptide directing secretion. A disulfide bridge connects residues C81 and C174.

This sequence belongs to the calycin superfamily. Lipocalin family. In terms of tissue distribution, synthesized in Bowman glands, which secrete the mucus that bathes the cilia of the olfactory neuroepithelium.

Its subcellular location is the secreted. This chain is Olfactory protein, found in Lithobates pipiens (Northern leopard frog).